The primary structure comprises 189 residues: MTEYKLVVVGAGGVGKSALTIQLIQNHFVDEYDPTIEDSYRKQVVIDGETCLLDILDTAGQEEYSAMRDQYMRTGEGFLCVFAINNSKSFADINLYREQIKRVKDSDDVPMVLVGNKCDLPTRTVDTKQAHELAKSYGIPFIETSAKTRQGVEDAFYTLVREIRQYRMKKLNSSEDGTQGCMGLPCVVM.

Residues 10–18 and 29–30 contribute to the GTP site; these read GAGGVGKSA and VD. The short motif at 32-40 is the Effector region element; it reads YDPTIEDSY. 57–61 is a GTP binding site; that stretch reads DTAGQ. Residue Ser-89 is modified to Phosphoserine. A GTP-binding site is contributed by 116 to 119; the sequence is NKCD. Residues 166-185 form a hypervariable region region; it reads YRMKKLNSSEDGTQGCMGLP. Lys-170 is covalently cross-linked (Glycyl lysine isopeptide (Lys-Gly) (interchain with G-Cter in ubiquitin)). The S-palmitoyl cysteine moiety is linked to residue Cys-181. Cys-186 carries S-farnesyl cysteine lipidation. Positions 187–189 are cleaved as a propeptide — removed in mature form; that stretch reads VVM.

This sequence belongs to the small GTPase superfamily. Ras family. In terms of assembly, interacts (active GTP-bound form preferentially) with RGS14. Interacts (active GTP-bound form) with RASSF7. Interacts (active GTP-bound form) with both SHOC2 and PP1c (all isoforms) to form a tertiary complex; SHOC2 and PP1c preferably bind M-Ras/MRAS, but they also bind K-Ras/KRAS, N-Ras/NRAS and H-Ras/HRAS. Post-translationally, palmitoylated by the ZDHHC9-GOLGA7 complex. Depalmitoylated by ABHD17A, ABHD17B and ABHD17C. A continuous cycle of de- and re-palmitoylation regulates rapid exchange between plasma membrane and Golgi. Acetylation at Lys-104 prevents interaction with guanine nucleotide exchange factors (GEFs). In terms of processing, ubiquitinated by the BCR(LZTR1) E3 ubiquitin ligase complex at Lys-170 in a non-degradative manner, leading to inhibit Ras signaling by decreasing Ras association with membranes. Post-translationally, phosphorylation at Ser-89 enhances NRAS association with its downstream effectors.

It is found in the cell membrane. The protein localises to the golgi apparatus membrane. It carries out the reaction GTP + H2O = GDP + phosphate + H(+). Its activity is regulated as follows. Alternates between an inactive form bound to GDP and an active form bound to GTP. Activated by a guanine nucleotide-exchange factor (GEF) and inactivated by a GTPase-activating protein (GAP). Functionally, ras proteins bind GDP/GTP and possess intrinsic GTPase activity. This chain is GTPase NRas (Nras), found in Rattus norvegicus (Rat).